A 281-amino-acid chain; its full sequence is Pseudouridine-5'-phosphate glycosidase (281 aa).

Residue E9 is the Proton donor of the active site. Substrate-binding residues include K69 and V89. D118 is a Mn(2+) binding site. Residue 120 to 122 participates in substrate binding; it reads SAD. The active-site Nucleophile is K139.

This sequence belongs to the pseudouridine-5'-phosphate glycosidase family. Homotrimer. It depends on Mn(2+) as a cofactor.

It carries out the reaction D-ribose 5-phosphate + uracil = psi-UMP + H2O. Functionally, catalyzes the reversible cleavage of pseudouridine 5'-phosphate (PsiMP) to ribose 5-phosphate and uracil. Functions biologically in the cleavage direction, as part of a pseudouridine degradation pathway. This chain is Pseudouridine-5'-phosphate glycosidase, found in Thermus thermophilus (strain ATCC BAA-163 / DSM 7039 / HB27).